The primary structure comprises 606 residues: NADH-ubiquinone oxidoreductase chain 5 (606 aa).

Methionine 1 carries the N-formylmethionine modification. The next 15 membrane-spanning stretches (helical) occupy residues 4 to 24, 43 to 63, 87 to 107, 117 to 137, 140 to 160, 171 to 191, 213 to 233, 241 to 261, 273 to 293, 310 to 330, 366 to 386, 413 to 433, 457 to 477, 482 to 502, and 582 to 602; these read FSSLSLVTLLLLTMPIMMMSF, AFITSMIPTMMFIHSGQELII, MMFIPVALFVTWSIMEFSMWY, FFKYLLLFLITMLILVTANNL, LFIGWEGVGIMSFLLIGWWYG, AILYNRIGDIGFILAMAWFLT, LIGLALAATGKSAQFGLHPWL, TPVSALLHSSTMVVAGIFLLI, IQSITLCLGAITTLFTAMCAL, LGLMMVTIGINQPYLAFLHIC, MPFTTTALIVGSLALTGMPFL, LIATSFTAIYSTRIIFFALLG, LLIGSLFAGYIISNNIPPTTI, MPYYLKTTALIVTILGFILAL, and GLIKLYFLSFLITILISMILF.

In terms of assembly, core subunit of respiratory chain NADH dehydrogenase (Complex I) which is composed of 45 different subunits.

Its subcellular location is the mitochondrion inner membrane. It carries out the reaction a ubiquinone + NADH + 5 H(+)(in) = a ubiquinol + NAD(+) + 4 H(+)(out). In terms of biological role, core subunit of the mitochondrial membrane respiratory chain NADH dehydrogenase (Complex I) which catalyzes electron transfer from NADH through the respiratory chain, using ubiquinone as an electron acceptor. Essential for the catalytic activity and assembly of complex I. This Bos taurus (Bovine) protein is NADH-ubiquinone oxidoreductase chain 5 (MT-ND5).